Reading from the N-terminus, the 176-residue chain is Large ribosomal subunit protein uL22z (176 aa).

Residues 154 to 163 (KEEPVKKEPE) show a composition bias toward basic and acidic residues. The tract at residues 154-176 (KEEPVKKEPETQLAAKSKKGASS) is disordered.

It belongs to the universal ribosomal protein uL22 family.

The sequence is that of Large ribosomal subunit protein uL22z (RPL17A) from Arabidopsis thaliana (Mouse-ear cress).